We begin with the raw amino-acid sequence, 584 residues long: MAGRRLNLRWALSVLCVLLMAETVSGTRGSSTGAHISPQFPASGVNQTPVVDCRKVCGLNVSDRCDFIRTNPDCHSDGGYLDYLEGIFCHFPPSLLPLAVTLYVSWLLYLFLILGVTAAKFFCPNLSAISTTLKLSHNVAGVTFLAFGNGAPDIFSALVAFSDPHTAGLALGALFGAGVLVTTVVAGGITILHPFMAASRPFFRDIVFYMVAVFLTFLMLFRGRVTLAWALGYLGLYVFYVVTVILCTWIYQRQRRGSLFCPMPVTPEILSDSEEDRVSSNTNSYDYGDEYRPLFFYQETTAQILVRALNPLDYMKWRRKSAYWKALKVFKLPVEFLLLLTVPVVDPDKDDQNWKRPLNCLHLVISPLVVVLTLQSGTYGVYEIGGLVPVWVVVVIAGTALASVTFFATSDSQPPRLHWLFAFLGFLTSALWINAAATEVVNILRSLGVVFRLSNTVLGLTLLAWGNSIGDAFSDFTLARQGYPRMAFSACFGGIIFNILVGVGLGCLLQISRSHTEVKLEPDGLLVWVLAGALGLSLVFSLVSVPLQCFQLSRVYGFCLLLFYLNFLVVALLTEFGVIHLKSM.

An N-terminal signal peptide occupies residues 1-26 (MAGRRLNLRWALSVLCVLLMAETVSG). Residues 27–95 (TRGSSTGAHI…GIFCHFPPSL (69 aa)) are Extracellular-facing. N60 carries N-linked (GlcNAc...) asparagine glycosylation. Residues 96–116 (LPLAVTLYVSWLLYLFLILGV) traverse the membrane as a helical segment. Residues 117–140 (TAAKFFCPNLSAISTTLKLSHNVA) are Cytoplasmic-facing. Residues 141–161 (GVTFLAFGNGAPDIFSALVAF) form a helical membrane-spanning segment. Residues 162–168 (SDPHTAG) are Extracellular-facing. Residues 169–189 (LALGALFGAGVLVTTVVAGGI) form a helical membrane-spanning segment. Residues 190–200 (TILHPFMAASR) lie on the Cytoplasmic side of the membrane. A helical membrane pass occupies residues 201-221 (PFFRDIVFYMVAVFLTFLMLF). The Extracellular portion of the chain corresponds to 222–226 (RGRVT). A helical membrane pass occupies residues 227 to 247 (LAWALGYLGLYVFYVVTVILC). Residues 248-325 (TWIYQRQRRG…KWRRKSAYWK (78 aa)) are Cytoplasmic-facing. Position 258 is a phosphoserine; by PKA (S258). A helical membrane pass occupies residues 326–346 (ALKVFKLPVEFLLLLTVPVVD). Residues 347-360 (PDKDDQNWKRPLNC) are Extracellular-facing. Residues 361 to 381 (LHLVISPLVVVLTLQSGTYGV) traverse the membrane as a helical segment. The Cytoplasmic portion of the chain corresponds to 382 to 383 (YE). The chain crosses the membrane as a helical span at residues 384-404 (IGGLVPVWVVVVIAGTALASV). At 405 to 416 (TFFATSDSQPPR) the chain is on the extracellular side. The chain crosses the membrane as a helical span at residues 417 to 437 (LHWLFAFLGFLTSALWINAAA). Residues 438–445 (TEVVNILR) lie on the Cytoplasmic side of the membrane. A helical transmembrane segment spans residues 446–466 (SLGVVFRLSNTVLGLTLLAWG). Residues 467–487 (NSIGDAFSDFTLARQGYPRMA) are Extracellular-facing. A helical membrane pass occupies residues 488–508 (FSACFGGIIFNILVGVGLGCL). Topologically, residues 509 to 524 (LQISRSHTEVKLEPDG) are cytoplasmic. A helical membrane pass occupies residues 525-545 (LLVWVLAGALGLSLVFSLVSV). Residues 546–558 (PLQCFQLSRVYGF) lie on the Extracellular side of the membrane. A helical transmembrane segment spans residues 559-579 (CLLLFYLNFLVVALLTEFGVI). Residues 580–584 (HLKSM) are Cytoplasmic-facing.

The protein belongs to the Ca(2+):cation antiporter (CaCA) (TC 2.A.19) family. SLC24A subfamily. Phosphorylation at Ser-258 by PKA prevents calcium overload. In terms of tissue distribution, present in pancreatic beta-cells (at protein level).

It is found in the mitochondrion inner membrane. The enzyme catalyses Ca(2+)(in) + 3 Na(+)(out) = Ca(2+)(out) + 3 Na(+)(in). It carries out the reaction 3 Li(+)(out) + Ca(2+)(in) = 3 Li(+)(in) + Ca(2+)(out). With respect to regulation, inhibited by the sodium/calcium exchanger inhibitor CGP-37157. Strongly inhibited by zinc. Functionally, mitochondrial sodium/calcium antiporter that mediates sodium-dependent calcium efflux from mitochondrion, by mediating the exchange of 3 sodium ions per 1 calcium ion. Plays a central role in mitochondrial calcium homeostasis by mediating mitochondrial calcium extrusion: calcium efflux is essential for mitochondrial function and cell survival, notably in cardiomyocytes. Regulates rates of glucose-dependent insulin secretion in pancreatic beta-cells during the first phase of insulin secretion: acts by mediating efflux of calcium from mitochondrion, thereby affecting cytoplasmic calcium responses. Required for store-operated Ca(2+) entry (SOCE) and Ca(2+) release-activated Ca(2+) (CRAC) channel regulation: sodium transport by SLC8B1 leads to promote calcium-shuttling that modulates mitochondrial redox status, thereby regulating SOCE activity. Involved in B-lymphocyte chemotaxis. Able to transport Ca(2+) in exchange of either Li(+) or Na(+), explaining how Li(+) catalyzes Ca(2+) exchange. In contrast to other members of the family its function is independent of K(+). This is Mitochondrial sodium/calcium exchanger protein from Homo sapiens (Human).